The primary structure comprises 698 residues: Methionine--tRNA ligase (698 aa).

Residues 18–28 (PYANGDLHVGH) carry the 'HIGH' region motif. Zn(2+)-binding residues include C149, C152, C161, and C165. ATP is bound at residue T350. Residues 567–590 (EAADAGDEEGEDEDEEPPAADLEP) are disordered. Residues 570 to 584 (DAGDEEGEDEDEEPP) are compositionally biased toward acidic residues. The tRNA-binding domain maps to 600-698 (DFQDLDIRVA…EDAEPGTKVQ (99 aa)).

This sequence belongs to the class-I aminoacyl-tRNA synthetase family. MetG type 1 subfamily. Homodimer. Zn(2+) serves as cofactor.

The protein localises to the cytoplasm. The catalysed reaction is tRNA(Met) + L-methionine + ATP = L-methionyl-tRNA(Met) + AMP + diphosphate. Functionally, is required not only for elongation of protein synthesis but also for the initiation of all mRNA translation through initiator tRNA(fMet) aminoacylation. The chain is Methionine--tRNA ligase from Natronomonas pharaonis (strain ATCC 35678 / DSM 2160 / CIP 103997 / JCM 8858 / NBRC 14720 / NCIMB 2260 / Gabara) (Halobacterium pharaonis).